The following is a 397-amino-acid chain: Dual specificity mitogen-activated protein kinase kinase 4 (397 aa).

The segment at Met1–Lys38 is disordered. An N-acetylalanine modification is found at Ala2. The span at Ser7–Gly20 shows a compositional bias: gly residues. Residues Met35–Pro50 form a d domain region. At Arg56 the chain carries Asymmetric dimethylarginine; alternate. Residue Arg56 is modified to Omega-N-methylarginine; alternate. Ser88 bears the Phosphoserine mark. One can recognise a Protein kinase domain in the interval Leu100–Leu366. Residues Ile106 to Val114 and Lys129 each bind ATP. The Proton acceptor role is filled by Asp227. Ser255 bears the Phosphoserine mark. Thr259 is modified (phosphothreonine). Residues His362–Gln385 are DVD domain.

This sequence belongs to the protein kinase superfamily. STE Ser/Thr protein kinase family. MAP kinase kinase subfamily. In terms of assembly, interacts with SPAG9. Interacts (via its D domain) with its substrates MAPK8/JNK1, MAPK9/JNK2, MAPK10/JNK3, MAPK11 and MAPK14. Interacts (via its DVD domain) with MAP3Ks activators like MAP3K1/MEKK1 and MAP3K11/MLK3. Interacts with ARRB1, ARRB2 and MAPK8IP3/JIP3. Activated by phosphorylation on Ser-255 and Thr-259 by MAP kinase kinase kinases (MAP3Ks). In terms of tissue distribution, strong expression is detected in most of the central nervous system and in liver and thymus during early stages of development. While expression in nervous system increases over time, expression in fetal liver and thymus gradually decreases as embryogenesis proceeds. High level of expression in the central nervous system persists throughout postnatal development and remained at a stable level in adult brain.

The protein localises to the cytoplasm. Its subcellular location is the nucleus. It catalyses the reaction L-seryl-[protein] + ATP = O-phospho-L-seryl-[protein] + ADP + H(+). The enzyme catalyses L-threonyl-[protein] + ATP = O-phospho-L-threonyl-[protein] + ADP + H(+). The catalysed reaction is L-tyrosyl-[protein] + ATP = O-phospho-L-tyrosyl-[protein] + ADP + H(+). Its activity is regulated as follows. Activated in response to a variety of cellular stresses, including UV and gamma-irradiation, heat shock, hyperosmolarity, T-cell receptor stimulation, peroxide and inflammatory cytokines. Also activated by developmental cues. MAP2K4/MKK4 is activated by the majority of MKKKs, such as MAP3K5/ASK1, MAP3K1/MEKK1, MAP3K7/TAK1, MAP3K10/MLK2, MAP3K11/MLK3, MAP3K12/DLK and MAP3K13/LZK. Its function is as follows. Dual specificity protein kinase which acts as an essential component of the MAP kinase signal transduction pathway. Essential component of the stress-activated protein kinase/c-Jun N-terminal kinase (SAP/JNK) signaling pathway. With MAP2K7/MKK7, is the one of the only known kinase to directly activate the stress-activated protein kinase/c-Jun N-terminal kinases MAPK8/JNK1, MAPK9/JNK2 and MAPK10/JNK3. MAP2K4/MKK4 and MAP2K7/MKK7 both activate the JNKs by phosphorylation, but they differ in their preference for the phosphorylation site in the Thr-Pro-Tyr motif. MAP2K4 shows preference for phosphorylation of the Tyr residue and MAP2K7/MKK7 for the Thr residue. The phosphorylation of the Thr residue by MAP2K7/MKK7 seems to be the prerequisite for JNK activation at least in response to pro-inflammatory cytokines, while other stimuli activate both MAP2K4/MKK4 and MAP2K7/MKK7 which synergistically phosphorylate JNKs. MAP2K4 is required for maintaining peripheral lymphoid homeostasis. The MKK/JNK signaling pathway is also involved in mitochondrial death signaling pathway, including the release cytochrome c, leading to apoptosis. Whereas MAP2K7/MKK7 exclusively activates JNKs, MAP2K4/MKK4 additionally activates the p38 MAPKs MAPK11, MAPK12, MAPK13 and MAPK14. This chain is Dual specificity mitogen-activated protein kinase kinase 4 (Map2k4), found in Mus musculus (Mouse).